The chain runs to 78 residues: D-alanyl carrier protein (78 aa).

In terms of domain architecture, Carrier spans 1-77 (MAVKEEVVEI…KVIAKVESLI (77 aa)). O-(pantetheine 4'-phosphoryl)serine is present on Ser35.

It belongs to the DltC family. Post-translationally, 4'-phosphopantetheine is transferred from CoA to a specific serine of apo-DCP.

It localises to the cytoplasm. The protein operates within cell wall biogenesis; lipoteichoic acid biosynthesis. Its function is as follows. Carrier protein involved in the D-alanylation of lipoteichoic acid (LTA). The loading of thioester-linked D-alanine onto DltC is catalyzed by D-alanine--D-alanyl carrier protein ligase DltA. The DltC-carried D-alanyl group is further transferred to cell membrane phosphatidylglycerol (PG) by forming an ester bond, probably catalyzed by DltD. D-alanylation of LTA plays an important role in modulating the properties of the cell wall in Gram-positive bacteria, influencing the net charge of the cell wall. The protein is D-alanyl carrier protein of Leuconostoc citreum (strain KM20).